A 103-amino-acid chain; its full sequence is Co-chaperonin GroES (103 aa).

Belongs to the GroES chaperonin family. Heptamer of 7 subunits arranged in a ring. Interacts with the chaperonin GroEL.

Its subcellular location is the cytoplasm. Together with the chaperonin GroEL, plays an essential role in assisting protein folding. The GroEL-GroES system forms a nano-cage that allows encapsulation of the non-native substrate proteins and provides a physical environment optimized to promote and accelerate protein folding. GroES binds to the apical surface of the GroEL ring, thereby capping the opening of the GroEL channel. The chain is Co-chaperonin GroES from Prochlorococcus marinus (strain MIT 9313).